Consider the following 31-residue polypeptide: Fibrinogen beta chain (31 aa).

Positions 1 to 10 (HYYDDTDEEE) are enriched in acidic residues. The disordered stretch occupies residues 1 to 31 (HYYDDTDEEERIVSTVDARGHRPLDKKREEA). Tyr2 carries the post-translational modification Sulfotyrosine; partial. Tyr3 bears the Sulfotyrosine mark. Residues 18-31 (ARGHRPLDKKREEA) show a composition bias toward basic and acidic residues.

In terms of assembly, heterohexamer; disulfide linked. Contains 2 sets of 3 non-identical chains (alpha, beta and gamma). The 2 heterotrimers are in head to head conformation with the N-termini in a small central domain. In terms of processing, conversion of fibrinogen to fibrin is triggered by thrombin, which cleaves fibrinopeptides A and B from alpha and beta chains, and thus exposes the N-terminal polymerization sites responsible for the formation of the soft clot.

It is found in the secreted. Its function is as follows. Cleaved by the protease thrombin to yield monomers which, together with fibrinogen alpha (FGA) and fibrinogen gamma (FGG), polymerize to form an insoluble fibrin matrix. Fibrin has a major function in hemostasis as one of the primary components of blood clots. In addition, functions during the early stages of wound repair to stabilize the lesion and guide cell migration during re-epithelialization. Was originally thought to be essential for platelet aggregation, based on in vitro studies using anticoagulated blood. However subsequent studies have shown that it is not absolutely required for thrombus formation in vivo. Enhances expression of SELP in activated platelets. Maternal fibrinogen is essential for successful pregnancy. Fibrin deposition is also associated with infection, where it protects against IFNG-mediated hemorrhage. May also facilitate the antibacterial immune response via both innate and T-cell mediated pathways. In Canis lupus familiaris (Dog), this protein is Fibrinogen beta chain (FGB).